A 708-amino-acid chain; its full sequence is MSQDKAFTMEVRDDGVAVITIDVPGESMNTLKDSFAEEVGSLMNRLESDDSVKGVVFISGKPGSFIAGADINMIDGCENAVDAESLARKGQAMFDRIEQLNVPVVAAINGACLGGGLELAMACHVRVCTDNSKTALGLPEVKLGLLPGSGGTQRLPELVGVQQGLTMILTGKELRAKQALKAGLVTEVVPQSILLDVAVEHALKRKPKSTKPPLKGISKVLEATKFGRDIIFKKASEQAQKKAQGNYPAIDKIIQTVREGVERGREAGLDKEARSFGELAMTPESYQLRQIFFATTEMKKETGADGVKPDSVKRVGVLGGGLMGGGIAYVTAAKAGIPARIKDIAEDGIRHALHYSYERLDKKVKRRHMRRAELEKTMLMLSGSLDYSGFERTDVVIEAVFEDLNLKQKMVADVEEHADESTIFATNTSSLPITQIAAKAKRPEQVIGLHYFSPVDKMPLAEIITHPGTSDKTIATTVSLAKKQGKTPIVVKDGAGFYVNRILAPYMNEAARLLLAGEPIEHIDKTLVKFGFPVGPITLLDEVGIDVAAKVAPVLVKELGDRFEAPEAFEKLIDDDRKGKKNQKGFYQYGKSVKGKPVDTSVYSLLDIDPNESKSADEIIDICLLPMLNEAAYCLQEEIIRSPRDGDIGAIFGIGFPPFLGGPFRYMDSQGLETIVNKLEKLAAERGERYTPAPLLKQMLENGWNFYQ.

Positions 1–190 are enoyl-CoA hydratase; sequence MSQDKAFTME…KAGLVTEVVP (190 aa). The interval 310 to 708 is 3-hydroxyacyl-CoA dehydrogenase; it reads DSVKRVGVLG…MLENGWNFYQ (399 aa).

In the N-terminal section; belongs to the enoyl-CoA hydratase/isomerase family. It in the central section; belongs to the 3-hydroxyacyl-CoA dehydrogenase family. Heterotetramer of two alpha chains (FadJ) and two beta chains (FadI).

It localises to the cytoplasm. It carries out the reaction a (3S)-3-hydroxyacyl-CoA = a (2E)-enoyl-CoA + H2O. The catalysed reaction is a 4-saturated-(3S)-3-hydroxyacyl-CoA = a (3E)-enoyl-CoA + H2O. The enzyme catalyses a (3S)-3-hydroxyacyl-CoA + NAD(+) = a 3-oxoacyl-CoA + NADH + H(+). It catalyses the reaction (3S)-3-hydroxybutanoyl-CoA = (3R)-3-hydroxybutanoyl-CoA. It participates in lipid metabolism; fatty acid beta-oxidation. In terms of biological role, catalyzes the formation of a hydroxyacyl-CoA by addition of water on enoyl-CoA. Also exhibits 3-hydroxyacyl-CoA epimerase and 3-hydroxyacyl-CoA dehydrogenase activities. This chain is Fatty acid oxidation complex subunit alpha, found in Idiomarina loihiensis (strain ATCC BAA-735 / DSM 15497 / L2-TR).